Reading from the N-terminus, the 308-residue chain is 4-hydroxyproline 2-epimerase (308 aa).

Catalysis depends on C88, which acts as the Proton acceptor. Residues 89 to 90 (GH), H208, and D232 each bind substrate. Residue C236 is the Proton donor of the active site. 237 to 238 (GT) lines the substrate pocket.

The protein belongs to the proline racemase family.

The catalysed reaction is trans-4-hydroxy-L-proline = cis-4-hydroxy-D-proline. In terms of biological role, catalyzes the epimerization of trans-4-hydroxy-L-proline (t4LHyp) to cis-4-hydroxy-D-proline (c4DHyp). Is likely involved in a degradation pathway that converts t4LHyp to alpha-ketoglutarate. Can also catalyze the epimerization of trans-3-hydroxy-L-proline (t3LHyp) to cis-3-hydroxy-D-proline (c3DHyp), albeit with 19-fold lower efficiency. Displays no proline racemase activity. The chain is 4-hydroxyproline 2-epimerase from Chromobacterium violaceum (strain ATCC 12472 / DSM 30191 / JCM 1249 / CCUG 213 / NBRC 12614 / NCIMB 9131 / NCTC 9757 / MK).